A 243-amino-acid chain; its full sequence is 1-(5-phosphoribosyl)-5-[(5-phosphoribosylamino)methylideneamino] imidazole-4-carboxamide isomerase (243 aa).

Asp14 serves as the catalytic Proton acceptor. Asp135 functions as the Proton donor in the catalytic mechanism.

It belongs to the HisA/HisF family.

Its subcellular location is the cytoplasm. The catalysed reaction is 1-(5-phospho-beta-D-ribosyl)-5-[(5-phospho-beta-D-ribosylamino)methylideneamino]imidazole-4-carboxamide = 5-[(5-phospho-1-deoxy-D-ribulos-1-ylimino)methylamino]-1-(5-phospho-beta-D-ribosyl)imidazole-4-carboxamide. It participates in amino-acid biosynthesis; L-histidine biosynthesis; L-histidine from 5-phospho-alpha-D-ribose 1-diphosphate: step 4/9. The polypeptide is 1-(5-phosphoribosyl)-5-[(5-phosphoribosylamino)methylideneamino] imidazole-4-carboxamide isomerase (Rubrobacter xylanophilus (strain DSM 9941 / JCM 11954 / NBRC 16129 / PRD-1)).